The sequence spans 347 residues: UDP-N-acetylenolpyruvoylglucosamine reductase (347 aa).

An FAD-binding PCMH-type domain is found at 16-187 (AIEQCSHYLV…IAVGLKLPKT (172 aa)). The active site involves arginine 163. Catalysis depends on serine 233, which acts as the Proton donor. Glutamate 328 is an active-site residue.

The protein belongs to the MurB family. It depends on FAD as a cofactor.

The protein localises to the cytoplasm. It carries out the reaction UDP-N-acetyl-alpha-D-muramate + NADP(+) = UDP-N-acetyl-3-O-(1-carboxyvinyl)-alpha-D-glucosamine + NADPH + H(+). It functions in the pathway cell wall biogenesis; peptidoglycan biosynthesis. Its function is as follows. Cell wall formation. The chain is UDP-N-acetylenolpyruvoylglucosamine reductase from Vibrio vulnificus (strain CMCP6).